The primary structure comprises 418 residues: ML-236A carboxylate methylbutanoyltransferase mlcH (418 aa).

Arginine 78 is a monacolin J binding site. Residue serine 81 is the Acyl-ester intermediate of the active site. Residues arginine 178, tyrosine 193, and tyrosine 262 each contribute to the monacolin J site. Residue glycine 370 coordinates 2-methylbutanoate.

This sequence belongs to the class-A beta-lactamase family.

It carries out the reaction ML-236A carboxylate + (S)-2-methylbutanoyl-[2-methylbutanoate polyketide synthase] = mevinic carboxylate + holo-[2-methylbutanoate polyketide synthase]. It participates in polyketide biosynthesis. Its function is as follows. Compactin diketide synthase; part of the gene cluster that mediates the biosynthesis of compactin, also known as mevastatin or ML-236B, and which acts as a potent competitive inhibitor of HMG-CoA reductase. Compactin biosynthesis is performed in two stages. The first stage is catalyzed by the nonaketide synthase mlcA, which belongs to type I polyketide synthases and catalyzes the iterative nine-step formation of the polyketide. This PKS stage is completed by the action of dehydrogenase mlcG, which catalyzes the NADPH-dependent reduction of the unsaturated tetra-, penta- and heptaketide intermediates that arise during the mlcA-mediated biosynthesis of the nonaketide chain and leads to dihydro-ML-236C carboxylate. Covalently bound dihydro-ML-236C carboxylate is released from mlcA by the mlcF esterase. Conversion of dihydro-ML-236C carboxylate into ML-236A carboxylate is subsequently performed with the participation of molecular oxygen and P450 monoogygenase mlcC. Finally, mlcH performs the conversion of ML-236A carboxylate to ML-236B/compactin carboxylate through the addition of the side-chain diketide moiety produced by the diketide synthase mlcB. This chain is ML-236A carboxylate methylbutanoyltransferase mlcH, found in Penicillium citrinum.